The primary structure comprises 490 residues: Hexokinase (490 aa).

The 446-residue stretch at glutamine 21 to alanine 466 folds into the Hexokinase domain. Residues aspartate 75–isoleucine 209 form a hexokinase small subdomain region. The tract at residues asparagine 210–aspartate 455 is hexokinase large subdomain.

Belongs to the hexokinase family. As to quaternary structure, monomer.

The enzyme catalyses a D-hexose + ATP = a D-hexose 6-phosphate + ADP + H(+). It catalyses the reaction D-fructose + ATP = D-fructose 6-phosphate + ADP + H(+). It carries out the reaction D-glucose + ATP = D-glucose 6-phosphate + ADP + H(+). The protein operates within carbohydrate metabolism; hexose metabolism. It functions in the pathway carbohydrate degradation; glycolysis; D-glyceraldehyde 3-phosphate and glycerone phosphate from D-glucose: step 1/4. In terms of biological role, catalyzes the phosphorylation of hexose, such as D-glucose and D-fructose, to hexose 6-phosphate (D-glucose 6-phosphate and D-fructose 6-phosphate, respectively). Mediates the initial step of glycolysis by catalyzing phosphorylation of D-glucose to D-glucose 6-phosphate. This chain is Hexokinase (hxkA), found in Emericella nidulans (strain FGSC A4 / ATCC 38163 / CBS 112.46 / NRRL 194 / M139) (Aspergillus nidulans).